Consider the following 183-residue polypeptide: ATP synthase subunit b, chloroplastic (183 aa).

The chain crosses the membrane as a helical span at residues 25–45 (DILATNLINLTVVVGVLIFFG).

The protein belongs to the ATPase B chain family. As to quaternary structure, F-type ATPases have 2 components, F(1) - the catalytic core - and F(0) - the membrane proton channel. F(1) has five subunits: alpha(3), beta(3), gamma(1), delta(1), epsilon(1). F(0) has four main subunits: a(1), b(1), b'(1) and c(10-14). The alpha and beta chains form an alternating ring which encloses part of the gamma chain. F(1) is attached to F(0) by a central stalk formed by the gamma and epsilon chains, while a peripheral stalk is formed by the delta, b and b' chains.

Its subcellular location is the plastid. The protein resides in the chloroplast thylakoid membrane. F(1)F(0) ATP synthase produces ATP from ADP in the presence of a proton or sodium gradient. F-type ATPases consist of two structural domains, F(1) containing the extramembraneous catalytic core and F(0) containing the membrane proton channel, linked together by a central stalk and a peripheral stalk. During catalysis, ATP synthesis in the catalytic domain of F(1) is coupled via a rotary mechanism of the central stalk subunits to proton translocation. Its function is as follows. Component of the F(0) channel, it forms part of the peripheral stalk, linking F(1) to F(0). The sequence is that of ATP synthase subunit b, chloroplastic from Sorghum bicolor (Sorghum).